The chain runs to 2479 residues: Centrosomal protein of 290 kDa (2479 aa).

The segment at 1–695 (MPPNINWKEI…IESKNAEGIF (695 aa)) is self-association (with itself or C-terminus). 7 coiled-coil regions span residues 59-565 (MKMK…ERGK), 598-664 (SLKN…MQKD), 697-931 (ASLH…VCEK), 958-1027 (SLSE…IEQA), 1071-1498 (QRAE…ILSR), 1533-1584 (HTLK…LHIL), and 1635-2452 (DSLS…SEQL). Positions 149 to 163 (ALRNEEAENENSKLR) are enriched in basic and acidic residues. Residues 149–168 (ALRNEEAENENSKLRRENKR) are disordered. An interaction with IQCB1 region spans residues 696 to 896 (DASLHLKAQV…TVLQVNEKSL (201 aa)). Residues 1966–2479 (TTGMTVDQVL…EESPVNFPIY (514 aa)) are self-association (with itself or N-terminus). Positions 2458 to 2479 (SPVAASEEFEDEEESPVNFPIY) are disordered.

Part of the tectonic-like complex (also named B9 complex). Interacts with ATF4 via its N-terminal region. Associates with the BBSome complex, interacting (via N-terminus) with BBS4. Interacts with IQCB1/NPHP5; IQCB1 and CEP290/NPHP6 are proposed to form a functional NPHP5-6 module localized to the centrosome. Interacts with NPHP4; the interaction likely requires additional interactors. Interacts with ZNF423, FAM161A, CEP162, CEP162, CEP131, TALPID3, CCDC13, CC2D2A, RPGRIP1. Can self-associate (homo- or heteromeric). Interacts with CCP110; required for suppressing cilia formation. Interacts with RPGR. Associates (via C-terminus) with microtubules; association to microtubule is reduced in response to cellular stress, such as ultraviolet light (UV) radiation or heat shock, in a process that requires p38 MAP kinase signaling. Interacts with FAM161A. Interacts with PCM1. Interacts with CCDC66. Interacts with ARMC9 and CSPP1. In terms of processing, ubiquitinated. May undergo monoubiquitination; monoubiquitination is inhibited in response to cellular stress, such as ultraviolet light (UV) radiation or heat shock, but does not cause its displacement from centriolar satellites. In terms of tissue distribution, ubiquitous. Expressed strongly in placenta and weakly in brain.

The protein localises to the cytoplasm. Its subcellular location is the cytoskeleton. It is found in the microtubule organizing center. It localises to the centrosome. The protein resides in the centriolar satellite. The protein localises to the nucleus. Its subcellular location is the cell projection. It is found in the cilium. It localises to the cilium basal body. The protein resides in the centriole. The protein localises to the cytoplasmic vesicle. Involved in early and late steps in cilia formation. Its association with CCP110 is required for inhibition of primary cilia formation by CCP110. May play a role in early ciliogenesis in the disappearance of centriolar satellites and in the transition of primary ciliar vesicles (PCVs) to capped ciliary vesicles (CCVs). Required for the centrosomal recruitment of RAB8A and for the targeting of centriole satellite proteins to centrosomes such as of PCM1. Required for the correct localization of ciliary and phototransduction proteins in retinal photoreceptor cells; may play a role in ciliary transport processes. Required for efficient recruitment of RAB8A to primary cilium. In the ciliary transition zone is part of the tectonic-like complex which is required for tissue-specific ciliogenesis and may regulate ciliary membrane composition. Involved in regulation of the BBSome complex integrity, specifically for presence of BBS2, BBS5 and BBS8/TTC8 in the complex, and in ciliary targeting of selected BBSome cargos. May play a role in controlling entry of the BBSome complex to cilia possibly implicating IQCB1/NPHP5. Activates ATF4-mediated transcription. This is Centrosomal protein of 290 kDa (CEP290) from Homo sapiens (Human).